The following is a 601-amino-acid chain: Probable Xaa-Pro aminopeptidase P (601 aa).

Residues aspartate 398, aspartate 409, glutamate 507, and glutamate 521 each contribute to the Mn(2+) site.

It belongs to the peptidase M24B family. The cofactor is Mn(2+).

It catalyses the reaction Release of any N-terminal amino acid, including proline, that is linked to proline, even from a dipeptide or tripeptide.. Functionally, catalyzes the removal of a penultimate prolyl residue from the N-termini of peptides. The sequence is that of Probable Xaa-Pro aminopeptidase P (ampp) from Sclerotinia sclerotiorum (strain ATCC 18683 / 1980 / Ss-1) (White mold).